A 115-amino-acid chain; its full sequence is UPF0102 protein Kole_1919 (115 aa).

It belongs to the UPF0102 family.

In Kosmotoga olearia (strain ATCC BAA-1733 / DSM 21960 / TBF 19.5.1), this protein is UPF0102 protein Kole_1919.